We begin with the raw amino-acid sequence, 1282 residues long: Clustered mitochondria protein homolog (1282 aa).

A disordered region spans residues 1–50 (MADASQATTPAAEGNPVPEVPETQTPPADVNGTTEQEQTEEGAEQALEDQ). Low complexity predominate over residues 16-36 (PVPEVPETQTPPADVNGTTEQ). Over residues 37–47 (EQTEEGAEQAL) the composition is skewed to acidic residues. Residues 331-575 (DNTRSQETYL…RITPLDIAWM (245 aa)) enclose the Clu domain. The stretch at 623–650 (EEKKEGEEATEEAKTEEIKTEEAEKSEE) forms a coiled coil. Composition is skewed to basic and acidic residues over residues 624–661 (EKKE…KTEE) and 668–680 (VAEK…AKED). 2 disordered regions span residues 624-680 (EKKE…AKED) and 913-945 (PVAE…TSPV). 3 TPR repeats span residues 1021–1054 (AQMY…AERT), 1063–1096 (VLNY…WKVI), and 1105–1138 (ITTM…CNKV). The interval 1257 to 1282 (VENSEKKKGGKKSKGPSNPKKRGGKA) is disordered. The span at 1264–1282 (KGGKKSKGPSNPKKRGGKA) shows a compositional bias: basic residues.

The protein belongs to the CLU family. As to quaternary structure, may associate with the eukaryotic translation initiation factor 3 (eIF-3) complex.

It localises to the cytoplasm. In terms of biological role, mRNA-binding protein involved in proper cytoplasmic distribution of mitochondria. The protein is Clustered mitochondria protein homolog of Neurospora crassa (strain ATCC 24698 / 74-OR23-1A / CBS 708.71 / DSM 1257 / FGSC 987).